Consider the following 145-residue polypeptide: Ribonuclease H (145 aa).

In terms of domain architecture, RNase H type-1 spans methionine 1–alanine 141. Mg(2+) is bound by residues aspartate 9, glutamate 47, aspartate 69, and aspartate 133.

This sequence belongs to the RNase H family. In terms of assembly, monomer. It depends on Mg(2+) as a cofactor.

It localises to the cytoplasm. The catalysed reaction is Endonucleolytic cleavage to 5'-phosphomonoester.. Functionally, endonuclease that specifically degrades the RNA of RNA-DNA hybrids. This chain is Ribonuclease H, found in Cupriavidus metallidurans (strain ATCC 43123 / DSM 2839 / NBRC 102507 / CH34) (Ralstonia metallidurans).